Here is a 359-residue protein sequence, read N- to C-terminus: Transcription factor MafA (359 aa).

A Phosphoserine modification is found at serine 14. Lysine 32 participates in a covalent cross-link: Glycyl lysine isopeptide (Lys-Gly) (interchain with G-Cter in SUMO2). 2 disordered regions span residues 40-105 (RFCH…VGGA) and 172-226 (GGGA…AGHH). The span at 46–73 (PPGSLSSTPLSTPCSSVPSSPSFCAPSP) shows a compositional bias: low complexity. Serine 49 is modified (phosphoserine). 2 positions are modified to phosphothreonine: threonine 53 and threonine 57. Serine 61 and serine 65 each carry phosphoserine. Positions 74–84 (GTGGGAGGGGS) are enriched in gly residues. The span at 181-209 (GHHHGAHHTAHHHHSAHHHHHHHHHHGGS) shows a compositional bias: basic residues. Residues 210–224 (GHHGGGAGHGGGGAG) are compositionally biased toward gly residues. The segment at 260–285 (RLKQKRRTLKNRGYAQSCRFKRVQQR) is basic motif. A bZIP domain is found at 260–323 (RLKQKRRTLK…DLYKEKYEKL (64 aa)). Positions 288–309 (LESEKCQLQSQVEQLKLEVGRL) are leucine-zipper. The tract at residues 322-359 (KLAGRGGPGGAGGAGFPREPSPAQAGPGAAKGAPDFFL) is disordered. The segment covering 325–336 (GRGGPGGAGGAG) has biased composition (gly residues). Over residues 343–359 (PAQAGPGAAKGAPDFFL) the composition is skewed to low complexity.

The protein belongs to the bZIP family. Maf subfamily. Forms homodimers. Interacts with NEUROD1 and PDX1. May interact with MAFB, FOS, JUN and PCAF. Post-translationally, ubiquitinated, leading to its degradation by the proteasome. In terms of processing, phosphorylated at tyrosines. In terms of tissue distribution, expressed in brain, lung, spleen, pancreas and kidney. In the pancreas, expressed in the insulin-producing beta-cells of the islets of Langerhans (at protein level). Also expressed in the eye.

It localises to the nucleus. Functionally, transcriptional factor that activates insulin gene expression. Acts synergistically with NEUROD1/BETA2 and PDX1. Binds the insulin enhancer C1/RIPE3b element. Binds to consensus TRE-type MARE 5'-TGCTGACTCAGCA-3' DNA sequence. This is Transcription factor MafA (Mafa) from Mus musculus (Mouse).